The chain runs to 126 residues: MAKDYPRSRRIAEQLRRELAEVIRDDVDDPRVGSVTISEVQVSRDLAHATVYVTVLGAEAAEAQAGIDILNKAHGFLRSQVARRIRAKRTPSLRFLHDTAFDRGARLSALIDEVAPPPADDEPSKE.

Belongs to the RbfA family. In terms of assembly, monomer. Binds 30S ribosomal subunits, but not 50S ribosomal subunits or 70S ribosomes.

It is found in the cytoplasm. One of several proteins that assist in the late maturation steps of the functional core of the 30S ribosomal subunit. Associates with free 30S ribosomal subunits (but not with 30S subunits that are part of 70S ribosomes or polysomes). Required for efficient processing of 16S rRNA. May interact with the 5'-terminal helix region of 16S rRNA. The polypeptide is Ribosome-binding factor A (Halorhodospira halophila (strain DSM 244 / SL1) (Ectothiorhodospira halophila (strain DSM 244 / SL1))).